The primary structure comprises 388 residues: MAEKGITAPKGFVASATTAGIKASGNPDMALVVNQGPEFSAAAVFTRNRVFAAPVKVSRENVADGQIRAVLYNAGNANACNGLQGEKDARESVSHLAQNLGLEDSDIGVCSTGLIGELLPMDKLNAGIDQLTAEGALGDNGAAAAKAIMTTDTVDKETVVFADGWTVGGMGKGVGMMAPSLATMLVCLTTDASVTQEMAQIALANATAVTFDTLDIDGSTSTNDTVFLLASGASGITPTQDELNDAVYAACSDIAAKLQADAEGVTKRVAVTVVGTTNNEQAINAARTVARDNLFKCAMFGSDPNWGRVLAAVGMADADMEPEKISVFFNGQAVCLDSTGAPGAREVDLSGADIDVRIDLGTSGEGQATVRTTDLSFSYVEINSAYSS.

Substrate contacts are provided by Thr-150, Lys-172, Thr-183, Glu-263, Asn-383, and Ser-388. The active-site Nucleophile is Thr-183.

It belongs to the ArgJ family. As to quaternary structure, heterotetramer of two alpha and two beta chains.

It localises to the cytoplasm. It carries out the reaction N(2)-acetyl-L-ornithine + L-glutamate = N-acetyl-L-glutamate + L-ornithine. It catalyses the reaction L-glutamate + acetyl-CoA = N-acetyl-L-glutamate + CoA + H(+). The protein operates within amino-acid biosynthesis; L-arginine biosynthesis; L-ornithine and N-acetyl-L-glutamate from L-glutamate and N(2)-acetyl-L-ornithine (cyclic): step 1/1. Its pathway is amino-acid biosynthesis; L-arginine biosynthesis; N(2)-acetyl-L-ornithine from L-glutamate: step 1/4. Catalyzes two activities which are involved in the cyclic version of arginine biosynthesis: the synthesis of N-acetylglutamate from glutamate and acetyl-CoA as the acetyl donor, and of ornithine by transacetylation between N(2)-acetylornithine and glutamate. The polypeptide is Arginine biosynthesis bifunctional protein ArgJ (Corynebacterium glutamicum (strain ATCC 13032 / DSM 20300 / JCM 1318 / BCRC 11384 / CCUG 27702 / LMG 3730 / NBRC 12168 / NCIMB 10025 / NRRL B-2784 / 534)).